The chain runs to 152 residues: Globin CTT-E/E' (152 aa).

The N-terminal stretch at 1–15 is a signal peptide; sequence MKFIILALCVAAASA. A Globin domain is found at 16 to 152; that stretch reads LSGDQIGLVQ…AFFGAVFAKM (137 aa). Heme b-binding residues include His73 and His102.

Belongs to the globin family.

This Chironomus thummi thummi (Midge) protein is Globin CTT-E/E' (CTT-E).